A 137-amino-acid polypeptide reads, in one-letter code: Small ribosomal subunit protein uS12 (137 aa).

The disordered stretch occupies residues 1–26; sequence MPTINQLVTKGRKRKASKTKSPALNQ.

Belongs to the universal ribosomal protein uS12 family. In terms of assembly, part of the 30S ribosomal subunit. Contacts proteins S8 and S17. May interact with IF1 in the 30S initiation complex.

With S4 and S5 plays an important role in translational accuracy. Its function is as follows. Interacts with and stabilizes bases of the 16S rRNA that are involved in tRNA selection in the A site and with the mRNA backbone. Located at the interface of the 30S and 50S subunits, it traverses the body of the 30S subunit contacting proteins on the other side and probably holding the rRNA structure together. The combined cluster of proteins S8, S12 and S17 appears to hold together the shoulder and platform of the 30S subunit. The polypeptide is Small ribosomal subunit protein uS12 (Mycoplasmopsis pulmonis (strain UAB CTIP) (Mycoplasma pulmonis)).